Here is a 371-residue protein sequence, read N- to C-terminus: Probable alcohol acetyltransferase (371 aa).

Catalysis depends on charge relay system residues S124 and H295. The disordered stretch occupies residues 325–352 (AKALEESPKESYSRPPAHQQPLHKNDFT). A compositionally biased stretch (basic and acidic residues) spans 327–336 (ALEESPKESY).

The protein belongs to the AB hydrolase superfamily.

Its function is as follows. Probable alcohol acetyltransferase that uses acetyl-CoA to synthesize acetate esters from various alcohols. Not involved in the synthesis of ethyl acetate. In Cyberlindnera fabianii (Yeast), this protein is Probable alcohol acetyltransferase (EAT2).